Consider the following 55-residue polypeptide: Ferredoxin-1 (55 aa).

2 consecutive 4Fe-4S ferredoxin-type domains span residues 2–27 and 28–55; these read YKIE…EQGD and TIFV…PVAE. 8 residues coordinate [4Fe-4S] cluster: Cys-8, Cys-11, Cys-14, Cys-18, Cys-37, Cys-40, Cys-43, and Cys-47.

The cofactor is [4Fe-4S] cluster.

Functionally, ferredoxins are iron-sulfur proteins that transfer electrons in a wide variety of metabolic reactions. The chain is Ferredoxin-1 from Rhodospirillum rubrum.